Here is an 85-residue protein sequence, read N- to C-terminus: CRISPR-associated endoribonuclease Cas2 2 (85 aa).

Residue aspartate 8 coordinates Mg(2+).

This sequence belongs to the CRISPR-associated endoribonuclease Cas2 protein family. In terms of assembly, homodimer, forms a heterotetramer with a Cas1 homodimer. Requires Mg(2+) as cofactor.

Its function is as follows. CRISPR (clustered regularly interspaced short palindromic repeat), is an adaptive immune system that provides protection against mobile genetic elements (viruses, transposable elements and conjugative plasmids). CRISPR clusters contain sequences complementary to antecedent mobile elements and target invading nucleic acids. CRISPR clusters are transcribed and processed into CRISPR RNA (crRNA). Functions as a ssRNA-specific endoribonuclease. Involved in the integration of spacer DNA into the CRISPR cassette. The protein is CRISPR-associated endoribonuclease Cas2 2 of Chloroflexus aurantiacus (strain ATCC 29366 / DSM 635 / J-10-fl).